A 255-amino-acid polypeptide reads, in one-letter code: Glutamate racemase (255 aa).

Substrate contacts are provided by residues 7-8 (DS) and 39-40 (YG). Cysteine 70 (proton donor/acceptor) is an active-site residue. Position 71–72 (71–72 (NT)) interacts with substrate. Cysteine 181 functions as the Proton donor/acceptor in the catalytic mechanism. 182–183 (TH) is a binding site for substrate.

The protein belongs to the aspartate/glutamate racemases family.

It carries out the reaction L-glutamate = D-glutamate. The protein operates within cell wall biogenesis; peptidoglycan biosynthesis. In terms of biological role, provides the (R)-glutamate required for cell wall biosynthesis. The polypeptide is Glutamate racemase (Helicobacter pylori (strain P12)).